Reading from the N-terminus, the 317-residue chain is MTDLPFTLDQLRILKAIAKEGSFKKAANSLYVSQPAISLQIQNLERQLNVALFERGNKKATLTEAGSLLLRYGGRILALCEETCRALDDLQNLQGGTLIIGASQTTGTYLMPRLIGLFRQRYPQVAVQLQVHSTRLISWSVANGQVDLAIIGGEVPTELQDVLQVTSYAEDELALILPKSHPFSKLGDIQKEDLYRLRFIALDTQSTIRKVIDKVLSQHGIDSSRFKIEMELNSIEAIKNAVQSGLGAAFVSVSAIAKELELGIVHWAQIENVTIKRMLSIIVNPNRYKSKATETFSQEILTLFVTPSQHKTLGDKL.

The region spanning 6–63 is the HTH lysR-type domain; sequence FTLDQLRILKAIAKEGSFKKAANSLYVSQPAISLQIQNLERQLNVALFERGNKKATLT. A DNA-binding region (H-T-H motif) is located at residues 23–42; that stretch reads FKKAANSLYVSQPAISLQIQ.

It belongs to the LysR transcriptional regulatory family.

The protein resides in the plastid. The protein localises to the chloroplast. In terms of biological role, trans-acting transcriptional regulator of RuBisCO genes (rbcL and rbcS) expression. The sequence is that of Probable RuBisCO transcriptional regulator (rbcR) from Porphyra purpurea (Red seaweed).